The sequence spans 137 residues: MVHLTTLLCKAYRGGHLTIRLALGGCTNRPFYRIVAAHNKCPRDGRFVEQLGSYDPLPNSHGEKLVALNLDRIRHWIGCGAHLSKPMEKLLGLAGFFPLHPMMITNAERLRRKLAREVLLASQKTDAEATDAEATET.

The transit peptide at 1–34 (MVHLTTLLCKAYRGGHLTIRLALGGCTNRPFYRI) directs the protein to the mitochondrion. Thr130 is modified (phosphothreonine).

The protein belongs to the bacterial ribosomal protein bS16 family. As to quaternary structure, component of the mitochondrial ribosome small subunit (28S) which comprises a 12S rRNA and about 30 distinct proteins.

It is found in the mitochondrion. The chain is Small ribosomal subunit protein bS16m (MRPS16) from Pongo abelii (Sumatran orangutan).